We begin with the raw amino-acid sequence, 338 residues long: Ferredoxin--NADP reductase (338 aa).

7 residues coordinate FAD: Asp-38, Gln-46, Tyr-51, Val-91, Phe-125, Asp-291, and Thr-331.

Belongs to the ferredoxin--NADP reductase type 2 family. In terms of assembly, homodimer. The cofactor is FAD.

The enzyme catalyses 2 reduced [2Fe-2S]-[ferredoxin] + NADP(+) + H(+) = 2 oxidized [2Fe-2S]-[ferredoxin] + NADPH. The sequence is that of Ferredoxin--NADP reductase from Orientia tsutsugamushi (strain Ikeda) (Rickettsia tsutsugamushi).